The following is a 437-amino-acid chain: tRNA wybutosine-synthesizing protein 2 homolog (437 aa).

S-adenosyl-L-methionine contacts are provided by residues S208, K215, E255, and 283 to 284 (DN). Residues 331–344 (SFSGKNPQPPGSSN) are compositionally biased toward polar residues. Residues 331–374 (SFSGKNPQPPGSSNMEKKHWPHPQKITTDKQGNRTTGSCMGEMS) are disordered.

This sequence belongs to the class I-like SAM-binding methyltransferase superfamily. TRM5/TYW2 family.

The enzyme catalyses 4-demethylwyosine(37) in tRNA(Phe) + S-adenosyl-L-methionine = 4-demethyl-7-[(3S)-3-amino-3-carboxypropyl]wyosine(37) in tRNA(Phe) + S-methyl-5'-thioadenosine + H(+). It participates in tRNA modification; wybutosine-tRNA(Phe) biosynthesis. Functionally, S-adenosyl-L-methionine-dependent transferase that acts as a component of the wybutosine biosynthesis pathway. Wybutosine is a hyper modified guanosine with a tricyclic base found at the 3'-position adjacent to the anticodon of eukaryotic phenylalanine tRNA. Catalyzes the transfer of the alpha-amino-alpha-carboxypropyl (acp) group from S-adenosyl-L-methionine to the C-7 position of 4-demethylwyosine (imG-14) to produce wybutosine-86. The polypeptide is tRNA wybutosine-synthesizing protein 2 homolog (Trmt12) (Rattus norvegicus (Rat)).